The primary structure comprises 288 residues: Serine/threonine-protein phosphatase PGAM5, mitochondrial (288 aa).

Over 1-6 (MAFRQA) the chain is Mitochondrial matrix. The helical transmembrane segment at 7 to 29 (LQLAACGLAGGSAAVLFSAVAVG) threads the bilayer. Residues 30 to 288 (KPRGGGDADT…FMPPDKITRS (259 aa)) lie on the Mitochondrial intermembrane side of the membrane. The interval 76-81 (NVESGE) is interaction with KEAP1. Phosphoserine occurs at positions 79 and 86. Lysine 115, lysine 143, and lysine 190 each carry N6-acetyllysine.

This sequence belongs to the phosphoglycerate mutase family. BPG-dependent PGAM subfamily. As to quaternary structure, dimer. Forms a ternary complex with NFE2L2 and KEAP1. Interacts with BCL2L1 and MAP3K5. Upon TNF-induced necrosis, forms in complex with RIPK1, RIPK3 and MLKL; the formation of this complex leads to PGAM5 phosphorylation. Isoform 2, but not isoform 1, interacts with DNM1L; this interaction leads to DNM1L dephosphorylation and activation and eventually to mitochondria fragmentation. Post-translationally, phosphorylated by the RIPK1/RIPK3 complex under necrotic conditions. This phosphorylation increases PGAM5 phosphatase activity. In terms of processing, proteolytically cleaved by PARL in response to loss of mitochondrial membrane potential.

It localises to the mitochondrion outer membrane. It is found in the mitochondrion inner membrane. It catalyses the reaction O-phospho-L-seryl-[protein] + H2O = L-seryl-[protein] + phosphate. The enzyme catalyses O-phospho-L-threonyl-[protein] + H2O = L-threonyl-[protein] + phosphate. In terms of biological role, mitochondrial serine/threonine phosphatase that dephosphorylates various substrates and thus plays a role in different biological processes including cellular senescence or mitophagy. Modulates cellular senescence by regulating mitochondrial dynamics. Mechanistically, participates in mitochondrial fission through dephosphorylating DNM1L/DRP1. Additionally, dephosphorylates MFN2 in a stress-sensitive manner and consequently protects it from ubiquitination and degradation to promote mitochondrial network formation. Regulates mitophagy independent of PARKIN by interacting with and dephosphorylating FUNDC1, which interacts with LC3. Regulates anti-oxidative response by forming a tertiary complex with KEAP1 and NRF2. Regulates necroptosis by acting as a RIPK3 target and recruiting the RIPK1-RIPK3-MLKL necrosis 'attack' complex to mitochondria. This Mus musculus (Mouse) protein is Serine/threonine-protein phosphatase PGAM5, mitochondrial (Pgam5).